The chain runs to 407 residues: Phosphoglycerate kinase (407 aa).

Residues 21-23, Arg-36, 59-62, Arg-116, and Arg-156 contribute to the substrate site; these read DLN and HQGR. ATP contacts are provided by residues Glu-332 and 358 to 361; that span reads GGDT.

It belongs to the phosphoglycerate kinase family. As to quaternary structure, monomer.

It localises to the cytoplasm. The enzyme catalyses (2R)-3-phosphoglycerate + ATP = (2R)-3-phospho-glyceroyl phosphate + ADP. It functions in the pathway carbohydrate degradation; glycolysis; pyruvate from D-glyceraldehyde 3-phosphate: step 2/5. The protein is Phosphoglycerate kinase of Halorubrum lacusprofundi (strain ATCC 49239 / DSM 5036 / JCM 8891 / ACAM 34).